The following is a 298-amino-acid chain: Probable 2-(5''-triphosphoribosyl)-3'-dephosphocoenzyme-A synthase (298 aa).

The protein belongs to the CitG/MdcB family.

It carries out the reaction 3'-dephospho-CoA + ATP = 2'-(5''-triphospho-alpha-D-ribosyl)-3'-dephospho-CoA + adenine. In Salmonella arizonae (strain ATCC BAA-731 / CDC346-86 / RSK2980), this protein is Probable 2-(5''-triphosphoribosyl)-3'-dephosphocoenzyme-A synthase.